The primary structure comprises 702 residues: Flagellar operon control protein UmoB (702 aa).

A run of 5 helical transmembrane segments spans residues 4–24 (SVII…FLFF), 204–224 (GFWN…ALMM), 227–247 (VFLP…LFLI), 343–363 (IIFV…QPLS), and 656–676 (GNTL…FFII).

Belongs to the IgaA family.

It localises to the cell inner membrane. In terms of biological role, up-regulator of flagellar flhDC master operon. The chain is Flagellar operon control protein UmoB (umoB) from Proteus mirabilis.